Reading from the N-terminus, the 94-residue chain is NADH-ubiquinone oxidoreductase 10.5 kDa subunit (94 aa).

Belongs to the complex I NDUFA2 subunit family. In terms of assembly, complex I is composed of about 40 different subunits.

It localises to the mitochondrion inner membrane. Functionally, accessory subunit of the mitochondrial membrane respiratory chain NADH dehydrogenase (Complex I), that is believed not to be involved in catalysis. Complex I functions in the transfer of electrons from NADH to the respiratory chain. The immediate electron acceptor for the enzyme is believed to be ubiquinone. The protein is NADH-ubiquinone oxidoreductase 10.5 kDa subunit (nuo-10.5) of Neurospora crassa (strain ATCC 24698 / 74-OR23-1A / CBS 708.71 / DSM 1257 / FGSC 987).